We begin with the raw amino-acid sequence, 1441 residues long: ABC transporter G family member 51 (1441 aa).

Residues 52–71 are disordered; it reads VLPDPDGLGGGDGGGRGEGQ. The segment covering 58 to 69 has biased composition (gly residues); it reads GLGGGDGGGRGE. Residues 154–428 form the ABC transporter 1 domain; sequence LISSHLLRPD…FKSLGFSLPP (275 aa). An ATP-binding site is contributed by 187–194; it reads GPPASGKS. The ABC transmembrane type-2 1 domain occupies 505 to 718; the sequence is SLVRACFARE…AQRAVSVNEF (214 aa). Transmembrane regions (helical) follow at residues 523–543, 558–578, 615–635, 642–662, 668–688, and 751–771; these read FLYTFRTCQVAFVGIITSTLF, LYLACLFFGLVHMMFNGFTEM, FIEAVVWSCVVYYTVGFAPTV, MLLLFSIHQMALGLFRMMGAI, IASTFGSAVLLAIFLLGGFVV, and FWIGVGVLLAYSIFFNIMFTL. In terms of domain architecture, ABC transporter 2 spans 838–1090; it reads MTFHNVNYYV…DMINYFQGIP (253 aa). An ATP-binding site is contributed by 883–890; that stretch reads GASGSGKT. The 218-residue stretch at 1163-1380 folds into the ABC transmembrane type-2 2 domain; sequence TQFMVCLRKQ…TLRGVITSQL (218 aa). A run of 7 helical transmembrane segments spans residues 1184 to 1204, 1214 to 1234, 1271 to 1291, 1300 to 1320, 1330 to 1350, 1355 to 1375, and 1413 to 1433; these read VVRLFFTSVAAIIFGSIFWNV, ILLLMGALYAACLFLGVNNAS, VEIPYIAVQTLIFGLITYFMV, LVLYLIYMFLTFTYFTFYGMV, MASVVSSAFYSLWNLLSGFLI, IPGWWIWFYYICPVAWTLRGV, and ATVAVLVAFSVFFFSIYAISI.

The protein belongs to the ABC transporter superfamily. ABCG family. PDR (TC 3.A.1.205) subfamily.

It localises to the membrane. Functionally, may be a general defense protein. The chain is ABC transporter G family member 51 from Oryza sativa subsp. japonica (Rice).